The chain runs to 31 residues: Photosystem I reaction center subunit XII (31 aa).

A helical membrane pass occupies residues 7 to 26 (QVFLALIIALIPGILADRLG).

Belongs to the PsaM family.

Its subcellular location is the plastid. It localises to the chloroplast thylakoid membrane. The polypeptide is Photosystem I reaction center subunit XII (Euglena deses).